The primary structure comprises 96 residues: QLRYREAVLRAVDRLNEQSSEANLYRLLELDQPPKADEDPGTPKPVSFTVKETVCPRPTRQPPELCDFKEKQCVGTVTLNPSIHSLDISCNEIQSV.

At Q1 the chain carries Pyrrolidone carboxylic acid. A disordered region spans residues 31–50 (DQPPKADEDPGTPKPVSFTV). 2 disulfide bridges follow: C55–C66 and C73–C90.

Belongs to the cathelicidin family.

The protein localises to the secreted. Its function is as follows. Probably a microbicidal peptide. The sequence is that of Cathelin from Sus scrofa (Pig).